We begin with the raw amino-acid sequence, 455 residues long: Major facilitator superfamily domain-containing protein 10 (455 aa).

The next 11 helical transmembrane spans lie at 27 to 47, 86 to 106, 113 to 135, 148 to 168, 176 to 196, 202 to 222, 275 to 295, 310 to 327, 336 to 356, 359 to 379, and 421 to 441; these read VVFLGLLLDLLAFTLLLPLLP, VLFGGLIGSAFSVLQFLCAPL, CLGRRPVMLLCLMGVATSYAVWA, LIGGISKGNVSLSTAIVADLG, GMAVIGVAFSLGFTLGPMLGA, MAPWFALLFAASDLLFIFCFL, LGLVYFLYLFLFSGLEYTLSF, KMFFLIGLTMATIQGAYA, VAAVKRALLLLVPAFLLIGWG, LPVLGLGLLLYSFAAAVVVPC, and LAGAQACFTTWSGLFLLPFFL.

It belongs to the major facilitator superfamily. In terms of tissue distribution, expressed in luminal membrane of renal tubules (at protein level). Detected in all tissues tested with higher expression in heart, splee, kidney, leukocytes and prostate.

The protein resides in the nucleus inner membrane. It is found in the cell membrane. Its function is as follows. Probable organic anion transporter which may serve as a transporter for some non-steroidal anti-inflammatory drugs (NSAIDs) as well as other organic anions across the luminal membranes of renal proximal tubules at the final excretion step into the urine. This Homo sapiens (Human) protein is Major facilitator superfamily domain-containing protein 10 (MFSD10).